Consider the following 259-residue polypeptide: MNQSDENIGKAGGIQVIARAASIMRALGSHPHGLSLAAIAQLVGLPRSTVQRIINALEEEFLVEALGPAGGFRLGPALGQLINQAQTDILSLVKPYLRSLAEELDESVCLASLAGDKIYVLDRIVSERELRVVFPIGINVPAAATAAGKVLLAALPDETLQAALGEQLPVLTSNTLGRKALVKQLSEVRQSGVASDLDEHIDGVCSFATLLDTYLGYYSLAIVMPSSRASKQSDLIKKALLQSKLNIERAIGRASKKAP.

One can recognise an HTH iclR-type domain in the interval 14 to 76 (IQVIARAASI…GPAGGFRLGP (63 aa)). A DNA-binding region (H-T-H motif) is located at residues 36 to 59 (LAAIAQLVGLPRSTVQRIINALEE). The region spanning 89-253 (ILSLVKPYLR…KLNIERAIGR (165 aa)) is the IclR-ED domain.

Represses the expression of the ttgGHI and ttgVW operons. Binds to the ttgGHI / ttgVW intergenic region, probably preventing binding of RNA polymerase; ttgV dissociates from this region in the presence of 1-hexanol. The chain is HTH-type transcriptional regulator TtgV (ttgV) from Pseudomonas putida (strain DOT-T1E).